The sequence spans 124 residues: Large ribosomal subunit protein bL12 (124 aa).

Belongs to the bacterial ribosomal protein bL12 family. As to quaternary structure, homodimer. Part of the ribosomal stalk of the 50S ribosomal subunit. Forms a multimeric L10(L12)X complex, where L10 forms an elongated spine to which 2 to 4 L12 dimers bind in a sequential fashion. Binds GTP-bound translation factors.

Its function is as follows. Forms part of the ribosomal stalk which helps the ribosome interact with GTP-bound translation factors. Is thus essential for accurate translation. The polypeptide is Large ribosomal subunit protein bL12 (Janthinobacterium sp. (strain Marseille) (Minibacterium massiliensis)).